A 428-amino-acid polypeptide reads, in one-letter code: Keratin, type I cytoskeletal 18-A (428 aa).

Residues 2–78 (SSSRSVYSSS…NVNLFGGVQN (77 aa)) form a head region. Residues 24 to 45 (SAPRFTPGSSAASVHAGAGGSG) are disordered. Residues 79–114 (EKETMQDLNDRLASYLERVRSLESANKKLEVQIRQH) are coil 1A. In terms of domain architecture, IF rod spans 79-389 (EKETMQDLND…RLLEGDSFDL (311 aa)). Residues 115–130 (TEKKGPAKDWSPYYMT) are linker 1. A coil 1B region spans residues 131 to 222 (IEDLKKQVFN…KNHQDDVNEL (92 aa)). Positions 223–246 (QAQIASSAVTVEVDAPKSQDLGKI) are linker 12. Residues 247-384 (MADLRAQYDE…IQTYRRLLEG (138 aa)) form a coil 2 region. Positions 385–428 (DSFDLQDAVPVVTTQTVKKVITTTQRLVDGKVVAESNNTEVIKS) are tail.

The protein belongs to the intermediate filament family. In terms of assembly, heterotetramer of two type I and two type II keratins. Keratin-18 associates with keratin-8. Proteolytically cleaved by caspases during epithelial cell apoptosis. In terms of tissue distribution, expressed at high levels in notochord and low levels in adult liver.

In terms of biological role, when phosphorylated, plays a role in filament reorganization. This Xenopus laevis (African clawed frog) protein is Keratin, type I cytoskeletal 18-A (krt18-a).